Consider the following 400-residue polypeptide: MMDNMQCGYYNSGSPYNFPSVLGPGAAIGPGPVPLGYCKEPCPTRSLCDPSYIGACGIQPLINPFGPRRAVTTWKINYLVSNRTNQAAHTDPDLINPWGIAIFGNQLWIANGQTDTITNYDLFGNKLLGSITVRNIAQNSSYPTGIAINCTGNFATTNGTLTKSGLFLTCSEHGTVHSYNPQVDPLVSFLVLNEQLTGEIHVFRGLAVAGDVLYLADFFQSKIMVFDSNYNRLLGFPFVDGDTSDPIPISYGPTNIVNIGCYLYVVYARKDPNVPLQAITGAGFGYISIFNLDGTFVRRFTSRGVLNDPWAIIPAPVECGFPPGSLLVSNHGDGRINAFDCNGRYVGPMLNQSGLPVIIDGLRGLAPHYTDFNEIFFTAEVDENIDGLVGSICKDQVIYF.

The protein belongs to the mimivirus R640 family.

The protein resides in the virion. This is an uncharacterized protein from Acanthamoeba polyphaga (Amoeba).